The primary structure comprises 151 residues: Centrin-A (151 aa).

EF-hand domains lie at 80–115 and 116–151; these read DVYA…LGEA and RSDS…KKIY. Ca(2+)-binding residues include aspartate 93, aspartate 95, serine 97, tyrosine 99, aspartate 104, aspartate 129, asparagine 131, aspartate 133, lysine 135, and glutamate 140.

The protein belongs to the centrin family.

Its subcellular location is the cytoplasm. It localises to the cytoskeleton. The protein localises to the microtubule organizing center. It is found in the centrosome. The protein resides in the nucleus. In terms of biological role, plays a fundamental role in microtubule-organizing center structure and function. The polypeptide is Centrin-A (cenA) (Dictyostelium discoideum (Social amoeba)).